The following is an 85-amino-acid chain: Large ribosomal subunit protein bL27 (85 aa).

A disordered region spans residues Met-1–Leu-21.

The protein belongs to the bacterial ribosomal protein bL27 family.

In Geobacter sulfurreducens (strain ATCC 51573 / DSM 12127 / PCA), this protein is Large ribosomal subunit protein bL27.